Here is a 1014-residue protein sequence, read N- to C-terminus: Exportin-T (1014 aa).

Belongs to the exportin family.

It localises to the nucleus. The protein resides in the cytoplasm. TRNA nucleus export receptor which facilitates tRNA translocation across the nuclear pore complex. Involved in pre-tRNA splicing, probably by affecting the interaction of pre-tRNA with splicing endonuclease. The protein is Exportin-T (LOS1) of Podospora anserina (strain S / ATCC MYA-4624 / DSM 980 / FGSC 10383) (Pleurage anserina).